The primary structure comprises 76 residues: Brevinin-2ISa (76 aa).

An N-terminal signal peptide occupies residues 1–22 (MFNMKKSLLLLFFLGTISLSLC). Positions 23 to 41 (EEERDADEDDGVEMTEEEV) are cleaved as a propeptide — removed in mature form. An intrachain disulfide couples C70 to C76.

In terms of tissue distribution, expressed by the skin glands.

The protein resides in the secreted. Functionally, has antimicrobial activity against Gram-negative bacterium E.coli ATCC 8739 (MIC=50 ug), against Gram positive bacteria S.aureus ATCC 6538 (MIC=12.5 ug), methicillin-resistant S.aureus ATCC 43300 (MIC=100 ug) and B.subtilis ATCC 6633 (MIC=12.5 ug). Has no activity against fungus C.albicans ATCC 90028. This is Brevinin-2ISa from Odorrana ishikawae (Ishikawa's frog).